Here is a 237-residue protein sequence, read N- to C-terminus: MRFFPPLEQGRLLRRYKRFLADIELTSGEQMTIHCPNTGSMLNCMREGGLVWFSRSNDPKRKLPGTWEISETPQGRLACVNTGRANALVEEALRAGTIAELAGFTALKREVAYGEEGSRIDFRLEFDGAPVYVEVKSVTLGYPDTAVAAFPDAVTQRGAKHLRELAKLARQGVRAVQLYCVNLTDVEAVRPAEEIDAAYAQALRAAVADGVEVLAYGTRLDAEGIVIDRRLPVLLNP.

Belongs to the SfsA family.

This is Sugar fermentation stimulation protein homolog from Pseudomonas putida (strain GB-1).